Here is a 180-residue protein sequence, read N- to C-terminus: Ribulose bisphosphate carboxylase small subunit, chloroplastic (180 aa).

The N-terminal 56 residues, 1–56 (MASSVLSSAAVATRSNVAQANMVAPFTGLKSAASFPVSRKQNLDITSIASNGGRVQ), are a transit peptide targeting the chloroplast.

It belongs to the RuBisCO small chain family. As to quaternary structure, heterohexadecamer of 8 large and 8 small subunits. In terms of assembly, (Microbial infection) Binds to tobamovirus movement protein at the plasmodesmata (e.g. tomato mosaic virus MP AC P69513); this interaction seems required for viral systemic movement.

Its subcellular location is the plastid. The protein localises to the chloroplast. It localises to the cell junction. The protein resides in the plasmodesma. In terms of biological role, ruBisCO catalyzes two reactions: the carboxylation of D-ribulose 1,5-bisphosphate, the primary event in carbon dioxide fixation, as well as the oxidative fragmentation of the pentose substrate. Both reactions occur simultaneously and in competition at the same active site. Although the small subunit is not catalytic it is essential for maximal activity. Involved in antiviral defenses. Its function is as follows. (Microbial infection) Required for tobamovirus movement (e.g. tobacco mosaic virus (TMV)). This Nicotiana benthamiana protein is Ribulose bisphosphate carboxylase small subunit, chloroplastic.